The following is a 313-amino-acid chain: NF-kappa-B inhibitor delta (313 aa).

6 ANK repeats span residues 48-83 (EGDTLLHLFAARGLRWAAYAAAEVLQVYRRLDIREH), 84-113 (KGKTPLLVAAAANQPLIVEDLLNLGAEPNA), 117-146 (QGRSVLHVAATYGLPGVLLAVLNSGVQVDL), 152-201 (EGLT…NHTS), 206-236 (SNKTVLHLAVQAANPTLVQLLLELPRGDLRT), and 243-276 (HGNTALHMAAALPPGPAQEAIVRHLLAAGADPTL).

It belongs to the NF-kappa-B inhibitor family. In terms of assembly, interacts with NFKB1, RELA and RELB; in the nucleus.

The protein resides in the nucleus. Functionally, regulates the expression of IL-2, IL-6, and other cytokines through regulation on NF-kappa-B activity. Functions in the regulation of inflammatory responses. Involved in the induction of T helper 17 cells (Th17) differentiation upon recognition of antigen by T cell antigen receptor (TCR). May also regulate TCR-induced negative selection of thymocytes. The sequence is that of NF-kappa-B inhibitor delta (NFKBID) from Homo sapiens (Human).